Here is a 320-residue protein sequence, read N- to C-terminus: Nucleotide-binding protein Pcryo_0127 (320 aa).

32 to 39 is an ATP binding site; that stretch reads GRSGSGKT. 82 to 85 contributes to the GTP binding site; it reads DIRT.

Belongs to the RapZ-like family.

Displays ATPase and GTPase activities. The sequence is that of Nucleotide-binding protein Pcryo_0127 from Psychrobacter cryohalolentis (strain ATCC BAA-1226 / DSM 17306 / VKM B-2378 / K5).